The following is a 108-amino-acid chain: Large ribosomal subunit protein bL21 (108 aa).

Belongs to the bacterial ribosomal protein bL21 family. As to quaternary structure, part of the 50S ribosomal subunit. Contacts protein L20.

In terms of biological role, this protein binds to 23S rRNA in the presence of protein L20. In Orientia tsutsugamushi (strain Ikeda) (Rickettsia tsutsugamushi), this protein is Large ribosomal subunit protein bL21.